We begin with the raw amino-acid sequence, 87 residues long: MANSAQARKRARTALKQRAHNASLRTAFRTAVKKVLKAIEAGDKAAARVVFQASEKVIDRIADKGVFHKNKAARHKSRLSAQIKAMA.

Residues 1–20 (MANSAQARKRARTALKQRAH) are disordered. The span at 7–19 (ARKRARTALKQRA) shows a compositional bias: basic residues.

Belongs to the bacterial ribosomal protein bS20 family.

Functionally, binds directly to 16S ribosomal RNA. This is Small ribosomal subunit protein bS20 from Chromobacterium violaceum (strain ATCC 12472 / DSM 30191 / JCM 1249 / CCUG 213 / NBRC 12614 / NCIMB 9131 / NCTC 9757 / MK).